The following is a 194-amino-acid chain: Peroxiredoxin 2 (194 aa).

The Thioredoxin domain occupies 2–160 (PQLQKPAPAF…TLRLVQAFQY (159 aa)). The active-site Cysteine sulfenic acid (-SOH) intermediate is cysteine 47. At threonine 193 the chain carries Phosphothreonine. Serine 194 carries the post-translational modification Phosphoserine.

Belongs to the peroxiredoxin family. AhpC/Prx1 subfamily. In terms of assembly, homodimer; disulfide-linked, upon oxidation. 5 homodimers assemble to form a ring-like decamer. Also exists as a monomer. The enzyme can be inactivated by further oxidation of the cysteine sulfenic acid (C(P)-SOH) to sulphinic acid (C(P)-SO2H) instead of its condensation to a disulfide bond. It can be reactivated by forming a transient disulfide bond with sulfiredoxin SRXN1, which reduces the cysteine sulfinic acid in an ATP- and Mg-dependent manner. Post-translationally, conjugated to URM1, a ubiquitin-like protein. As to expression, detected in the head and body (at protein level).

Its subcellular location is the cytoplasm. It carries out the reaction a hydroperoxide + [thioredoxin]-dithiol = an alcohol + [thioredoxin]-disulfide + H2O. Thiol-specific peroxidase that catalyzes the reduction of hydrogen peroxide and organic hydroperoxides to water and alcohols, respectively. Plays a role in cell protection against oxidative stress by detoxifying peroxides and as sensor of hydrogen peroxide-mediated signaling events. Might participate in the signaling cascades of growth factors and tumor necrosis factor-alpha by regulating the intracellular concentrations of H(2)O(2). Reduces an intramolecular disulfide bond in GDPD5 that gates the ability to GDPD5 to drive postmitotic motor neuron differentiation. The protein is Peroxiredoxin 2 of Drosophila melanogaster (Fruit fly).